The following is a 478-amino-acid chain: ATP-dependent RNA helicase DDX19A (478 aa).

At Ala-2 the chain carries N-acetylalanine. The tract at residues 2–299 (ATDSWALAVD…DPNVIKLKRE (298 aa)) is N-terminal lobe. Lys-26 is covalently cross-linked (Glycyl lysine isopeptide (Lys-Gly) (interchain with G-Cter in SUMO1); alternate). A Glycyl lysine isopeptide (Lys-Gly) (interchain with G-Cter in SUMO2); alternate cross-link involves residue Lys-26. Thr-42 carries the post-translational modification Phosphothreonine. Residues 54–67 (DRAAQSLLNKLIRS) are N-terminal helix. The short motif at 91 to 119 (KSFEELRLKPQLLQGVYAMGFNRPSKIQE) is the Q motif element. ATP-binding positions include Gln-118 and 137–144 (SQSGTGKT). In terms of domain architecture, Helicase ATP-binding spans 124–294 (MMLAEPPQNL…QKVVPDPNVI (171 aa)). A DEAD box motif is present at residues 241-244 (DEAD). The interval 300–478 (EETLDTIKQY…DLDEIEKIAN (179 aa)) is C-terminal lobe. The 169-residue stretch at 305–473 (TIKQYYVLCS…RLDTDDLDEI (169 aa)) folds into the Helicase C-terminal domain. ATP-binding residues include Arg-428 and Arg-431.

It belongs to the DEAD box helicase family. DDX19/DBP5 subfamily.

The protein localises to the cytoplasm. Its subcellular location is the nucleus. It is found in the nucleoplasm. The enzyme catalyses ATP + H2O = ADP + phosphate + H(+). In terms of biological role, ATP-dependent RNA helicase involved in mRNA export from the nucleus. Rather than unwinding RNA duplexes, DDX19 functions as a remodeler of ribonucleoprotein particles, whereby proteins bound to nuclear mRNA are dissociated and replaced by cytoplasmic mRNA binding proteins. This is ATP-dependent RNA helicase DDX19A (DDX19A) from Homo sapiens (Human).